The following is a 134-amino-acid chain: Large-conductance mechanosensitive channel (134 aa).

The next 2 membrane-spanning stretches (helical) occupy residues 16–36 and 76–96; these read VVDM…VSSF and GVFL…FIAV.

Belongs to the MscL family. Homopentamer.

It is found in the cell inner membrane. In terms of biological role, channel that opens in response to stretch forces in the membrane lipid bilayer. May participate in the regulation of osmotic pressure changes within the cell. The polypeptide is Large-conductance mechanosensitive channel (Thioalkalivibrio sulfidiphilus (strain HL-EbGR7)).